The primary structure comprises 95 residues: ESAT-6-like protein EsxH (95 aa).

Belongs to the WXG100 family. ESAT-6 subfamily. As to quaternary structure, forms a tight 1:1 complex with EsxG.

Its subcellular location is the secreted. The polypeptide is ESAT-6-like protein EsxH (Mycolicibacterium smegmatis (strain ATCC 700084 / mc(2)155) (Mycobacterium smegmatis)).